The following is a 148-amino-acid chain: Lysozyme C (148 aa).

An N-terminal signal peptide occupies residues 1 to 18 (MKVLVILGLVLLSVMVQG). A C-type lysozyme domain is found at 19–148 (KVFERCELAR…VSQYVQGCGV (130 aa)). 4 disulfide bridges follow: Cys-24–Cys-146, Cys-48–Cys-134, Cys-83–Cys-99, and Cys-95–Cys-113. Active-site residues include Glu-53 and Asp-71.

Belongs to the glycosyl hydrolase 22 family. Monomer.

Its subcellular location is the secreted. The enzyme catalyses Hydrolysis of (1-&gt;4)-beta-linkages between N-acetylmuramic acid and N-acetyl-D-glucosamine residues in a peptidoglycan and between N-acetyl-D-glucosamine residues in chitodextrins.. Lysozymes have primarily a bacteriolytic function; those in tissues and body fluids are associated with the monocyte-macrophage system and enhance the activity of immunoagents. The sequence is that of Lysozyme C (LYZ) from Saimiri sciureus (Common squirrel monkey).